The following is a 250-amino-acid chain: DNA polymerase sliding clamp (250 aa).

The protein belongs to the PCNA family. As to quaternary structure, homotrimer. The subunits circularize to form a toroid; DNA passes through its center. Replication factor C (RFC) is required to load the toroid on the DNA.

Its function is as follows. Sliding clamp subunit that acts as a moving platform for DNA processing. Responsible for tethering the catalytic subunit of DNA polymerase and other proteins to DNA during high-speed replication. The sequence is that of DNA polymerase sliding clamp from Methanococcus maripaludis (strain C7 / ATCC BAA-1331).